Consider the following 282-residue polypeptide: Probable endonuclease 4 (282 aa).

9 residues coordinate Zn(2+): histidine 69, histidine 109, glutamate 145, aspartate 179, histidine 182, histidine 216, aspartate 229, histidine 231, and glutamate 261.

It belongs to the AP endonuclease 2 family. It depends on Zn(2+) as a cofactor.

It catalyses the reaction Endonucleolytic cleavage to 5'-phosphooligonucleotide end-products.. In terms of biological role, endonuclease IV plays a role in DNA repair. It cleaves phosphodiester bonds at apurinic or apyrimidinic (AP) sites, generating a 3'-hydroxyl group and a 5'-terminal sugar phosphate. This Campylobacter fetus subsp. fetus (strain 82-40) protein is Probable endonuclease 4.